A 312-amino-acid polypeptide reads, in one-letter code: Malate dehydrogenase (312 aa).

NAD(+) contacts are provided by residues Gly-7–Gly-13 and Asp-34. 2 residues coordinate substrate: Arg-81 and Arg-87. NAD(+)-binding positions include Asn-94 and Ile-117–Asn-119. Positions 119 and 153 each coordinate substrate. His-177 functions as the Proton acceptor in the catalytic mechanism. Met-227 is an NAD(+) binding site.

Belongs to the LDH/MDH superfamily. MDH type 1 family. As to quaternary structure, homodimer.

The catalysed reaction is (S)-malate + NAD(+) = oxaloacetate + NADH + H(+). Functionally, catalyzes the reversible oxidation of malate to oxaloacetate. This is Malate dehydrogenase from Edwardsiella ictaluri (strain 93-146).